The chain runs to 253 residues: uncharacterized protein (253 aa).

7 to 14 (GKGGVGKT) is a binding site for ATP.

This sequence to M.jannaschii MJ0084 and MJ0823.

This is an uncharacterized protein from Methanocaldococcus jannaschii (strain ATCC 43067 / DSM 2661 / JAL-1 / JCM 10045 / NBRC 100440) (Methanococcus jannaschii).